A 123-amino-acid chain; its full sequence is NADH-quinone oxidoreductase subunit A (123 aa).

3 consecutive transmembrane segments (helical) span residues 11-31, 68-88, and 93-113; these read YLPI…IMML, LVAI…PWAI, and IGKI…IGFI.

The protein belongs to the complex I subunit 3 family. NDH-1 is composed of 14 different subunits. Subunits NuoA, H, J, K, L, M, N constitute the membrane sector of the complex.

The protein localises to the cell inner membrane. It carries out the reaction a quinone + NADH + 5 H(+)(in) = a quinol + NAD(+) + 4 H(+)(out). Its function is as follows. NDH-1 shuttles electrons from NADH, via FMN and iron-sulfur (Fe-S) centers, to quinones in the respiratory chain. The immediate electron acceptor for the enzyme in this species is believed to be ubiquinone. Couples the redox reaction to proton translocation (for every two electrons transferred, four hydrogen ions are translocated across the cytoplasmic membrane), and thus conserves the redox energy in a proton gradient. The polypeptide is NADH-quinone oxidoreductase subunit A (Rickettsia typhi (strain ATCC VR-144 / Wilmington)).